The following is a 187-amino-acid chain: Cell division protein SepF (187 aa).

The tract at residues glycine 13 to threonine 74 is disordered. Residues glutamate 16 to proline 65 are compositionally biased toward basic and acidic residues.

Belongs to the SepF family. In terms of assembly, homodimer. Interacts with FtsZ.

It localises to the cytoplasm. Its function is as follows. Cell division protein that is part of the divisome complex and is recruited early to the Z-ring. Probably stimulates Z-ring formation, perhaps through the cross-linking of FtsZ protofilaments. Its function overlaps with FtsA. This is Cell division protein SepF from Kineococcus radiotolerans (strain ATCC BAA-149 / DSM 14245 / SRS30216).